Reading from the N-terminus, the 177-residue chain is uncharacterized protein (177 aa).

The protein to M.jannaschii MJ0628.

This is an uncharacterized protein from Methanocaldococcus jannaschii (strain ATCC 43067 / DSM 2661 / JAL-1 / JCM 10045 / NBRC 100440) (Methanococcus jannaschii).